Reading from the N-terminus, the 390-residue chain is Ribosomal RNA small subunit methyltransferase H (390 aa).

S-adenosyl-L-methionine is bound by residues 47–49 (GGH), D66, F93, D122, and Q129. Residues 282–390 (SKTPPGLPID…SHREDVEGEQ (109 aa)) are disordered. Residues 305–316 (GSEKADEQENNK) show a composition bias toward basic and acidic residues. Positions 348 to 358 (SGSSTTYSARS) are enriched in polar residues. 2 stretches are compositionally biased toward basic and acidic residues: residues 360-372 (SRHEAHREGREHL) and 381-390 (SHREDVEGEQ).

Belongs to the methyltransferase superfamily. RsmH family.

The protein resides in the cytoplasm. It catalyses the reaction cytidine(1402) in 16S rRNA + S-adenosyl-L-methionine = N(4)-methylcytidine(1402) in 16S rRNA + S-adenosyl-L-homocysteine + H(+). Its function is as follows. Specifically methylates the N4 position of cytidine in position 1402 (C1402) of 16S rRNA. This chain is Ribosomal RNA small subunit methyltransferase H, found in Corynebacterium kroppenstedtii (strain DSM 44385 / JCM 11950 / CIP 105744 / CCUG 35717).